Reading from the N-terminus, the 616-residue chain is Sulfite reductase [NADPH] flavoprotein alpha-component (616 aa).

The region spanning 80-218 (LTIIFASQTG…SAAQWRKQAL (139 aa)) is the Flavodoxin-like domain. FMN-binding positions include 86-91 (SQTGNA), 133-136 (STNG), and 169-178 (LGDSSYEFFC). Residues 251 to 465 (QKPYAATLLT…VENNNNFKLP (215 aa)) form the FAD-binding FR-type domain. FAD contacts are provided by residues threonine 339, glycine 373, 403-406 (RLYS), 421-423 (TVG), tyrosine 427, and 436-439 (GGAS). NADP(+) contacts are provided by residues 536–537 (SR), 542–546 (KVYVQ), and aspartate 578. An FAD-binding site is contributed by tyrosine 616.

This sequence belongs to the NADPH-dependent sulphite reductase flavoprotein subunit CysJ family. The protein in the N-terminal section; belongs to the flavodoxin family. It in the C-terminal section; belongs to the flavoprotein pyridine nucleotide cytochrome reductase family. As to quaternary structure, alpha(8)-beta(8). The alpha component is a flavoprotein, the beta component is a hemoprotein. Requires FAD as cofactor. It depends on FMN as a cofactor.

The catalysed reaction is hydrogen sulfide + 3 NADP(+) + 3 H2O = sulfite + 3 NADPH + 4 H(+). Its pathway is sulfur metabolism; hydrogen sulfide biosynthesis; hydrogen sulfide from sulfite (NADPH route): step 1/1. In terms of biological role, component of the sulfite reductase complex that catalyzes the 6-electron reduction of sulfite to sulfide. This is one of several activities required for the biosynthesis of L-cysteine from sulfate. The flavoprotein component catalyzes the electron flow from NADPH -&gt; FAD -&gt; FMN to the hemoprotein component. This is Sulfite reductase [NADPH] flavoprotein alpha-component from Vibrio vulnificus (strain CMCP6).